We begin with the raw amino-acid sequence, 315 residues long: Protein SHORT INTERNODES 1 (315 aa).

Over residues 1-10 the composition is skewed to gly residues; the sequence is MAGFPLGGGS. Disordered stretches follow at residues 1-24 and 64-92; these read MAGF…PPVH and PPAP…GGGG. The span at 70-82 shows a compositional bias: low complexity; it reads AGASSSSSSRGMR. The span at 83-92 shows a compositional bias: gly residues; the sequence is SSGGGGGGGG. Zn(2+) is bound by residues cysteine 97, cysteine 100, cysteine 108, cysteine 113, cysteine 117, and cysteine 124. Positions 97-124 form a DNA-binding region, zn(2)-C6 fungal-type; degenerate; sequence CQDCGNQAKKDCTHMRCRTCCKSRGFAC. Composition is skewed to low complexity over residues 143-156 and 172-182; these read QQLA…AATA and RPSATTPTTSS. Residues 143–186 are disordered; that stretch reads QQLAALAASAAATAGGAGPSRDPTKRPRARPSATTPTTSSGDQQ. Positions 227 to 230 match the Required for homo- and heterodimerization motif; sequence IGGH.

This sequence belongs to the SHI protein family. In terms of assembly, forms homodimers (via C-terminus). Interacts with SPL14/IPA1 (via C-terminus). As to expression, predominantly expressed in axillary buds and young panicles.

Its subcellular location is the nucleus. Its function is as follows. Regulates tillering and panicle branching by modulating SPL14/IPA1 transcriptional activity on the downstream TB1 and DEP1 target genes. Binds directly to the 5'-T/GCTCTAC-3' DNA motif found in the promoter regions of both TB1 and DEP1. Represses the DNA binding activity of SPL14/IPA1 toward the promoters of both TB1 and DEP1. Exhibits weak transcriptional activation activity in yeast cells. The sequence is that of Protein SHORT INTERNODES 1 from Oryza sativa subsp. japonica (Rice).